The chain runs to 596 residues: Selenocysteine-specific elongation factor (596 aa).

The tr-type G domain occupies 5–217 (RVNVNVGVLG…LLTSQISIPT (213 aa)). The G1 stretch occupies residues 14 to 21 (GHIDSGKT). GDP-binding residues include Gly-19, Thr-21, and Ala-22. Residues Gly-19, Thr-21, and Ala-22 each contribute to the GTP site. A Mg(2+)-binding site is contributed by Thr-21. The G2 stretch occupies residues 46–50 (GITLD). Thr-48 and Asp-92 together coordinate Mg(2+). The segment at 92–95 (DCPG) is G3. Residues 146 to 149 (NKID) are G4. Residues Asp-149 and Lys-187 each contribute to the GDP site. GTP is bound by residues Asp-149 and Lys-187. Residues 185-187 (AAK) form a G5 region. A Phosphoserine modification is found at Ser-537. Position 545 is a phosphothreonine (Thr-545). The Nuclear localization signal motif lies at 547–553 (ALKKRAR). The segment at 548–573 (LKKRARAGRGEATRQEESAERSEPSQ) is disordered. Residues 555–571 (GRGEATRQEESAERSEP) show a composition bias toward basic and acidic residues. An Omega-N-methylarginine modification is found at Arg-556.

The protein belongs to the TRAFAC class translation factor GTPase superfamily. Classic translation factor GTPase family. SelB subfamily. Mg(2+) serves as cofactor. It depends on Mn(2+) as a cofactor.

The protein localises to the cytoplasm. Its subcellular location is the nucleus. It carries out the reaction GTP + H2O = GDP + phosphate + H(+). In terms of biological role, translation factor required for the incorporation of the rare amino acid selenocysteine encoded by UGA codons. Replaces the eRF1-eRF3-GTP ternary complex for the insertion of selenocysteine directed by the UGA codon. Insertion of selenocysteine at UGA codons is mediated by SECISBP2 and EEFSEC: SECISBP2 (1) specifically binds the SECIS sequence once the 80S ribosome encounters an in-frame UGA codon and (2) contacts the RPS27A/eS31 of the 40S ribosome before ribosome stalling. (3) GTP-bound EEFSEC then delivers selenocysteinyl-tRNA(Sec) to the 80S ribosome and adopts a preaccommodated state conformation. (4) After GTP hydrolysis, EEFSEC dissociates from the assembly, selenocysteinyl-tRNA(Sec) accommodates, and peptide bond synthesis and selenoprotein elongation occur. This chain is Selenocysteine-specific elongation factor, found in Homo sapiens (Human).